Reading from the N-terminus, the 313-residue chain is Putative phosphoribosylaminoimidazole-succinocarboxamide synthase 2 (313 aa).

Belongs to the SAICAR synthetase family.

The enzyme catalyses 5-amino-1-(5-phospho-D-ribosyl)imidazole-4-carboxylate + L-aspartate + ATP = (2S)-2-[5-amino-1-(5-phospho-beta-D-ribosyl)imidazole-4-carboxamido]succinate + ADP + phosphate + 2 H(+). The protein operates within purine metabolism; IMP biosynthesis via de novo pathway; 5-amino-1-(5-phospho-D-ribosyl)imidazole-4-carboxamide from 5-amino-1-(5-phospho-D-ribosyl)imidazole-4-carboxylate: step 1/2. This chain is Putative phosphoribosylaminoimidazole-succinocarboxamide synthase 2 (purC2), found in Mesorhizobium japonicum (strain LMG 29417 / CECT 9101 / MAFF 303099) (Mesorhizobium loti (strain MAFF 303099)).